We begin with the raw amino-acid sequence, 264 residues long: Thymidylate synthase (264 aa).

Residue R21 participates in dUMP binding. H51 lines the (6R)-5,10-methylene-5,6,7,8-tetrahydrofolate pocket. 126 to 127 (RR) is a binding site for dUMP. The active-site Nucleophile is the C146. DUMP-binding positions include 166–169 (RSCD), N177, and 207–209 (HLY). Position 169 (D169) interacts with (6R)-5,10-methylene-5,6,7,8-tetrahydrofolate. A263 is a binding site for (6R)-5,10-methylene-5,6,7,8-tetrahydrofolate.

Belongs to the thymidylate synthase family. Bacterial-type ThyA subfamily. In terms of assembly, homodimer.

Its subcellular location is the cytoplasm. The catalysed reaction is dUMP + (6R)-5,10-methylene-5,6,7,8-tetrahydrofolate = 7,8-dihydrofolate + dTMP. It participates in pyrimidine metabolism; dTTP biosynthesis. Its function is as follows. Catalyzes the reductive methylation of 2'-deoxyuridine-5'-monophosphate (dUMP) to 2'-deoxythymidine-5'-monophosphate (dTMP) while utilizing 5,10-methylenetetrahydrofolate (mTHF) as the methyl donor and reductant in the reaction, yielding dihydrofolate (DHF) as a by-product. This enzymatic reaction provides an intracellular de novo source of dTMP, an essential precursor for DNA biosynthesis. The polypeptide is Thymidylate synthase (Shewanella sp. (strain MR-4)).